A 159-amino-acid chain; its full sequence is Transcriptional repressor NrdR (159 aa).

A zinc finger lies at 3–34; the sequence is CPFCRHEDTQVVDSRVSEDGAAIRRRRRCSAC. An ATP-cone domain is found at 49 to 139; it reads PAVVKKDGSR…VYRRFEDVSE (91 aa).

It belongs to the NrdR family. Zn(2+) serves as cofactor.

Negatively regulates transcription of bacterial ribonucleotide reductase nrd genes and operons by binding to NrdR-boxes. The chain is Transcriptional repressor NrdR from Burkholderia multivorans (strain ATCC 17616 / 249).